The primary structure comprises 1527 residues: ATP-binding cassette sub-family C member 3 (1527 aa).

The Extracellular portion of the chain corresponds to 1-32 (MDALCGSGELGSKFWDSNLSVHTENPDLTPCF). Asn-18 carries an N-linked (GlcNAc...) asparagine glycan. Residues 33–53 (QNSLLAWVPCIYLWVALPCYL) form a helical membrane-spanning segment. Over 54-73 (LYLRHHCRGYIILSHLSKLK) the chain is Cytoplasmic. Residues 74–94 (MVLGVLLWCVSWADLFYSFHG) form a helical membrane-spanning segment. Residues 95-99 (LVHGR) are Extracellular-facing. The helical transmembrane segment at 100 to 120 (APAPVFFVTPLVVGVTMLLAT) threads the bilayer. Over 121–132 (LLIQYERLQGVQ) the chain is Cytoplasmic. A helical membrane pass occupies residues 133–153 (SSGVLIIFWFLCVVCAIVPFR). The Extracellular segment spans residues 154 to 171 (SKILLAKAEGEISDPFRF). Residues 172–192 (TTFYIHFALVLSALILACFRE) traverse the membrane as a helical segment. The Cytoplasmic segment spans residues 193-302 (KPPFFSAKNV…RPRKPSFLKA (110 aa)). A helical transmembrane segment spans residues 303 to 323 (LLATFGSSFLISACFKLIQDL). Residues 311–594 (FLISACFKLI…LPQLISNLTQ (284 aa)) form the ABC transmembrane type-1 1 domain. Residues 324–349 (LSFINPQLLSILIRFISNPMAPSWWG) are Extracellular-facing. Residues 350–370 (FLVAGLMFLCSMMQSLILQHY) form a helical membrane-spanning segment. Residues 371-426 (YHYIFVTGVKFRTGIMGVIYRKALVITNSVKRASTVGEIVNLMSVDAQRFMDLAPF) are Cytoplasmic-facing. Residues 427 to 447 (LNLLWSAPLQIILAIYFLWQN) traverse the membrane as a helical segment. At 448–450 (LGP) the chain is on the extracellular side. The helical transmembrane segment at 451-471 (SVLAGVAFMVLLIPLNGAVAV) threads the bilayer. The Cytoplasmic segment spans residues 472–533 (KMRAFQVKQM…LLRTAAYLHT (62 aa)). Residues 534 to 554 (TTTFTWMCSPFLVTLITLWVY) traverse the membrane as a helical segment. The Extracellular segment spans residues 555-576 (VYVDPNNVLDAEKAFVSVSLFN). The chain crosses the membrane as a helical span at residues 577–597 (ILRLPLNMLPQLISNLTQASV). Over 598–963 (SLKRIQQFLS…VELSVFWDYA (366 aa)) the chain is Cytoplasmic. The ABC transporter 1 domain occupies 629–851 (IHSGTFTWAQ…NGSFANFLCN (223 aa)). 661 to 668 (GPVGCGKS) contacts ATP. Phosphoserine occurs at positions 908 and 911. The segment at 910-932 (LSSDGEGQGRPVPRRHLGPSEKV) is disordered. The chain crosses the membrane as a helical span at residues 964–984 (KAVGLCTTLAICLLYVGQSAA). Residues 971 to 1252 (TLAICLLYVG…MIRMMSDLES (282 aa)) form the ABC transmembrane type-1 2 domain. At 985–1021 (AIGANVWLSAWTNDAMADSRQNNTSLRLGVYAALGIL) the chain is on the extracellular side. N-linked (GlcNAc...) asparagine glycans are attached at residues Asn-1006 and Asn-1007. The helical transmembrane segment at 1022-1042 (QGFLVMLAAMAMAAGGIQAAR) threads the bilayer. Over 1043–1085 (VLHQALLHNKIRSPQSFFDTTPSGRILNCFSKDIYVVDEVLAP) the chain is Cytoplasmic. Residues 1086–1106 (VILMLLNSFFNAISTLVVIMA) traverse the membrane as a helical segment. Ser-1107 is a topological domain (extracellular). A helical transmembrane segment spans residues 1108-1128 (TPLFTVVILPLAVLYTLVQRF). Over 1129 to 1199 (YAATSRQLKR…ISNRWLSIGV (71 aa)) the chain is Cytoplasmic. Residues 1200-1220 (EFVGNCVVLFAALFAVIGRSS) form a helical membrane-spanning segment. Residues 1221 to 1222 (LN) are Extracellular-facing. Residues 1223-1243 (PGLVGLSVSYSLQVTFALNWM) traverse the membrane as a helical segment. The Cytoplasmic portion of the chain corresponds to 1244-1527 (IRMMSDLESN…YGMARDAGLA (284 aa)). Positions 1291–1523 (FRNYSVRYRP…RGIFYGMARD (233 aa)) constitute an ABC transporter 2 domain. ATP is bound at residue 1323–1330 (GRTGAGKS).

This sequence belongs to the ABC transporter superfamily. ABCC family. Conjugate transporter (TC 3.A.1.208) subfamily. Mainly expressed in the liver. Also expressed in small intestine, colon, prostate, testis, brain and at a lower level in the kidney. In testis, localized to peritubular myoid cells, Leydig cells, along the basal membrane of Sertoli cells and moderately in the adluminal compartment of the seminiferous tubules.

It is found in the basolateral cell membrane. It localises to the basal cell membrane. It carries out the reaction taurocholate(in) + ATP + H2O = taurocholate(out) + ADP + phosphate + H(+). It catalyses the reaction glycocholate(in) + ATP + H2O = glycocholate(out) + ADP + phosphate + H(+). The enzyme catalyses taurolithocholate 3-sulfate(in) + ATP + H2O = taurolithocholate 3-sulfate(out) + ADP + phosphate + H(+). The catalysed reaction is taurochenodeoxycholate 3-sulfate(in) + ATP + H2O = taurochenodeoxycholate 3-sulfate(out) + ADP + phosphate + H(+). It carries out the reaction an S-substituted glutathione(in) + ATP + H2O = an S-substituted glutathione(out) + ADP + phosphate + H(+). It catalyses the reaction ATP + H2O + xenobioticSide 1 = ADP + phosphate + xenobioticSide 2.. The enzyme catalyses 17beta-estradiol 17-O-(beta-D-glucuronate)(in) + ATP + H2O = 17beta-estradiol 17-O-(beta-D-glucuronate)(out) + ADP + phosphate + H(+). The catalysed reaction is dehydroepiandrosterone 3-sulfate(in) + ATP + H2O = dehydroepiandrosterone 3-sulfate(out) + ADP + phosphate + H(+). It carries out the reaction leukotriene C4(in) + ATP + H2O = leukotriene C4(out) + ADP + phosphate + H(+). It catalyses the reaction (4Z,15Z)-bilirubin IXalpha C8-beta-D-glucuronoside(in) + ATP + H2O = (4Z,15Z)-bilirubin IXalpha C8-beta-D-glucuronoside(out) + ADP + phosphate + H(+). The enzyme catalyses (4Z,15Z)-bilirubin IXalpha C8,C12-beta-D-bisglucuronoside(in) + ATP + H2O = (4Z,15Z)-bilirubin IXalpha C8,C12-beta-D-bisglucuronoside(out) + ADP + phosphate + H(+). ATP-dependent transporter of the ATP-binding cassette (ABC) family that binds and hydrolyzes ATP to enable active transport of various substrates including many drugs, toxicants and endogenous compound across cell membranes. Transports glucuronide conjugates such as bilirubin diglucuronide, estradiol-17-beta-o-glucuronide and GSH conjugates such as leukotriene C4 (LTC4). Transports also various bile salts (taurocholate, glycocholate, taurochenodeoxycholate-3-sulfate, taurolithocholate- 3-sulfate). Does not contribute substantially to bile salt physiology but provides an alternative route for the export of bile acids and glucuronides from cholestatic hepatocytes. May contribute to regulate the transport of organic compounds in testes across the blood-testis-barrier. Can confer resistance to various anticancer drugs, methotrexate, tenoposide and etoposide, by decreasing accumulation of these drugs in cells. This is ATP-binding cassette sub-family C member 3 from Homo sapiens (Human).